The primary structure comprises 82 residues: UPF0729 protein C18orf32 homolog (82 aa).

A necessary for its localzation to the endoplasmic reticulum and lipid droplets region spans residues 1 to 37; sequence MVCIPCIVIPVLLWVYKKFLEPIVYPFISPIINRIWP. The disordered stretch occupies residues 46-82; it reads TSAKKEESNGTCKASGTSITNGSVSRGEEAVPDKKTD. Over residues 54–69 the composition is skewed to polar residues; the sequence is NGTCKASGTSITNGSV. Positions 71–82 are enriched in basic and acidic residues; it reads RGEEAVPDKKTD.

It belongs to the UPF0729 family.

It localises to the endoplasmic reticulum. Its subcellular location is the lipid droplet. In Xenopus tropicalis (Western clawed frog), this protein is UPF0729 protein C18orf32 homolog.